The primary structure comprises 180 residues: MSRQANRGTESKKMSSELFTLTYGALVTQLCKDYENDEDVNKQLDRMGYNIGVRLIEDFLARSNVGRCHDFRETADVIAKVAFKMYLGITPSITNWSPAGDEFSLILENNPLVDFVELPDNHSALIYSNLLCGVLRGALEMVQMAVEAKFVQDTLKGDGVTEIRMRFIRRIEDNLPAGEE.

Cys68 is lipidated: S-palmitoyl cysteine.

It belongs to the TRAPP small subunits family. BET3 subfamily. Homodimer. Component of the multisubunit transport protein particle (TRAPP) complex, which includes at least TRAPPC2, TRAPPC2L, TRAPPC3, TRAPPC3L, TRAPPC4, TRAPPC5, TRAPPC8, TRAPPC9, TRAPPC10, TRAPPC11 and TRAPPC12. Heterodimer with TRAPPC6A. The heterodimer TRAPPC3-TRAPPC6A interacts with TRAPPC2L. Heterodimer with TRAPPC6b. The heterodimer TRAPPC6B-TRAPPC3 interacts with TRAPPC1 likely providing a core for TRAPP complex formation. As to expression, widely expressed. Expressed in lung, heart, liver, spleen, brain and kidney.

It is found in the golgi apparatus. The protein localises to the cis-Golgi network. Its subcellular location is the endoplasmic reticulum. May play a role in vesicular transport from endoplasmic reticulum to Golgi. This chain is Trafficking protein particle complex subunit 3, found in Mus musculus (Mouse).